A 587-amino-acid polypeptide reads, in one-letter code: Aspartate--tRNA ligase (587 aa).

Residue E174 coordinates L-aspartate. An aspartate region spans residues 198–201 (QITK). Residue R220 coordinates L-aspartate. ATP is bound by residues 220-222 (RDE) and Q229. L-aspartate is bound at residue H443. E477 is an ATP binding site. An L-aspartate-binding site is contributed by R484. 529 to 532 (GLDR) serves as a coordination point for ATP.

It belongs to the class-II aminoacyl-tRNA synthetase family. Type 1 subfamily. In terms of assembly, homodimer.

The protein localises to the cytoplasm. The enzyme catalyses tRNA(Asp) + L-aspartate + ATP = L-aspartyl-tRNA(Asp) + AMP + diphosphate. Functionally, catalyzes the attachment of L-aspartate to tRNA(Asp) in a two-step reaction: L-aspartate is first activated by ATP to form Asp-AMP and then transferred to the acceptor end of tRNA(Asp). This Streptococcus pneumoniae (strain ATCC 700669 / Spain 23F-1) protein is Aspartate--tRNA ligase.